Here is a 393-residue protein sequence, read N- to C-terminus: MSLSLKRKDLMIVNMGPQHPSMHGVLRLIVTLDGEDVIDCEPILGYLHRGMEKIAENRSIIQYLPYVTRWDYLATMFTEAITVNAPEFLENIQIPQRASYIRVIMLELSRIASHLLWLGPFMADLGAQTPFFYIFRERELIYDLFEAATGMRMMHNYFRIGGVAADLPYGWMDKCLDFCDYFLQGVVEYQQLITRNPIFLERVEGVGFISGEEAVNWGLSGPMLRASGIQWDLRKIDPYESYNQFDWKVQWQKEGDSLARYLVRVGEMRESIKIIQQAVEKIPGGPYENLEARRFKKAKNPEWNDFEYRFLGKKPSPNFELSKQELYVRVEAPKGELGIYLVGDDSLFPWRWKIRPPGFINLQILPQLVKKMKLADIMTILGSIDIIMGEVDR.

It belongs to the complex I 49 kDa subunit family. In terms of assembly, NDH is composed of at least 16 different subunits, 5 of which are encoded in the nucleus.

It localises to the plastid. The protein localises to the chloroplast thylakoid membrane. It carries out the reaction a plastoquinone + NADH + (n+1) H(+)(in) = a plastoquinol + NAD(+) + n H(+)(out). It catalyses the reaction a plastoquinone + NADPH + (n+1) H(+)(in) = a plastoquinol + NADP(+) + n H(+)(out). Functionally, NDH shuttles electrons from NAD(P)H:plastoquinone, via FMN and iron-sulfur (Fe-S) centers, to quinones in the photosynthetic chain and possibly in a chloroplast respiratory chain. The immediate electron acceptor for the enzyme in this species is believed to be plastoquinone. Couples the redox reaction to proton translocation, and thus conserves the redox energy in a proton gradient. This is NAD(P)H-quinone oxidoreductase subunit H, chloroplastic from Sorghum bicolor (Sorghum).